We begin with the raw amino-acid sequence, 417 residues long: Multifunctional CCA protein (417 aa).

ATP is bound by residues Gly-8 and Arg-11. The CTP site is built by Gly-8 and Arg-11. Asp-21 and Asp-23 together coordinate Mg(2+). 3 residues coordinate ATP: Arg-91, Arg-137, and Arg-140. Arg-91, Arg-137, and Arg-140 together coordinate CTP. Residues 225-326 form the HD domain; sequence SGIHTLMTLQ…LNVLKKTDAF (102 aa).

Belongs to the tRNA nucleotidyltransferase/poly(A) polymerase family. Bacterial CCA-adding enzyme type 1 subfamily. In terms of assembly, monomer. Can also form homodimers and oligomers. Requires Mg(2+) as cofactor. The cofactor is Ni(2+).

It carries out the reaction a tRNA precursor + 2 CTP + ATP = a tRNA with a 3' CCA end + 3 diphosphate. The catalysed reaction is a tRNA with a 3' CCA end + 2 CTP + ATP = a tRNA with a 3' CCACCA end + 3 diphosphate. In terms of biological role, catalyzes the addition and repair of the essential 3'-terminal CCA sequence in tRNAs without using a nucleic acid template. Adds these three nucleotides in the order of C, C, and A to the tRNA nucleotide-73, using CTP and ATP as substrates and producing inorganic pyrophosphate. tRNA 3'-terminal CCA addition is required both for tRNA processing and repair. Also involved in tRNA surveillance by mediating tandem CCA addition to generate a CCACCA at the 3' terminus of unstable tRNAs. While stable tRNAs receive only 3'-terminal CCA, unstable tRNAs are marked with CCACCA and rapidly degraded. In Neisseria meningitidis serogroup C / serotype 2a (strain ATCC 700532 / DSM 15464 / FAM18), this protein is Multifunctional CCA protein.